The sequence spans 145 residues: CASP-like protein SELMODRAFT_406854 (145 aa).

Residues 1-31 are Cytoplasmic-facing; sequence MGVASQSSVANEAGAAPEASIQQTLRGFSSP. The chain crosses the membrane as a helical span at residues 32–52; sequence TSLLLRIATAVLCTLTLAFLV. The Extracellular portion of the chain corresponds to 53-75; the sequence is TSKERKEIASIDIVAIWSNSKAL. A helical transmembrane segment spans residues 76–96; it reads IFLAVVSGICLGYSLLHAAVF. The Cytoplasmic segment spans residues 97–112; that stretch reads LVMLSGNRKPLARKKA. The chain crosses the membrane as a helical span at residues 113–133; it reads LDWMVFLADQVFFKIFCWFSI. At 134–145 the chain is on the extracellular side; sequence RVSSRRSKAGFV.

It belongs to the Casparian strip membrane proteins (CASP) family. In terms of assembly, homodimer and heterodimers.

It is found in the cell membrane. This Selaginella moellendorffii (Spikemoss) protein is CASP-like protein SELMODRAFT_406854.